Consider the following 213-residue polypeptide: ATP-dependent Clp protease proteolytic subunit (213 aa).

S114 acts as the Nucleophile in catalysis. H139 is an active-site residue.

The protein belongs to the peptidase S14 family. As to quaternary structure, fourteen ClpP subunits assemble into 2 heptameric rings which stack back to back to give a disk-like structure with a central cavity, resembling the structure of eukaryotic proteasomes.

The protein resides in the cytoplasm. It carries out the reaction Hydrolysis of proteins to small peptides in the presence of ATP and magnesium. alpha-casein is the usual test substrate. In the absence of ATP, only oligopeptides shorter than five residues are hydrolyzed (such as succinyl-Leu-Tyr-|-NHMec, and Leu-Tyr-Leu-|-Tyr-Trp, in which cleavage of the -Tyr-|-Leu- and -Tyr-|-Trp bonds also occurs).. Functionally, cleaves peptides in various proteins in a process that requires ATP hydrolysis. Has a chymotrypsin-like activity. Plays a major role in the degradation of misfolded proteins. The sequence is that of ATP-dependent Clp protease proteolytic subunit from Pseudomonas putida (strain GB-1).